Here is a 75-residue protein sequence, read N- to C-terminus: Dermaseptin-SP5 (75 aa).

Positions 1–22 are cleaved as a signal peptide; the sequence is MAFLKKSLFLVLFLGLVSLSMC. Residues 23 to 45 constitute a propeptide that is removed on maturation; that stretch reads EEEKRENEVEEEQEDDEQSELRR. The interval 26–46 is disordered; the sequence is KRENEVEEEQEDDEQSELRRS. A compositionally biased stretch (acidic residues) spans 30–40; the sequence is EVEEEQEDDEQ. Pro72 carries the post-translational modification Proline amide. A propeptide spanning residues 74–75 is cleaved from the precursor; the sequence is EQ.

It belongs to the frog skin active peptide (FSAP) family. Dermaseptin subfamily. In terms of tissue distribution, expressed by the skin glands.

It is found in the secreted. Its subcellular location is the target cell membrane. Functionally, antimicrobial peptide with weak activity against Gram-positive and Gram-negative bacteria and fungi. Has been tested against E.coli (MIC=96.06-256 uM), S.aureus (MIC&gt;192.12 uM), K.pneumoniae (MIC&gt;189.00 uM) and C.albicans (MIC=384.24-1024 uM). Probably acts by disturbing membrane functions with its alpha-helical amphipathic structure. May penetrate bacterial membranes, but stay at the mammalian membrane surface. Does not show hemolytic activity. Does not interact at all with cardiolipin. The chain is Dermaseptin-SP5 from Agalychnis spurrelli (Gliding leaf frog).